Here is a 176-residue protein sequence, read N- to C-terminus: Japanin-like-RS (176 aa).

Positions 1 to 24 (MKVLLCLVCSFYIIVSSITTMTTG) are cleaved as a signal peptide. 2 disulfides stabilise this stretch: Cys-52–Cys-174 and Cys-138–Cys-162. The N-linked (GlcNAc...) asparagine glycan is linked to Asn-155.

Belongs to the calycin superfamily. Lipocalin family. Homodimer; non-disulfide-linked. Each monomer accommodates one molecule of cholesterol in a pocket. In terms of tissue distribution, expressed in salivary glands.

The protein localises to the secreted. Its function is as follows. Salivary tick protein that modulates host immune response. This protein blocks dendritic cell (DC) differentiation from monocytes. In addition, it inhibits up-regulation of costimulatory molecules and pro-inflammatory cytokines in response to stimuli and promotes up-regulation of co-inhibitory molecules and the anti-inflammatory cytokine interleukin-10. It has a pocket to accomodate cholesterol, which may have immune-modulatory roles, either directly or through interactions with the host gut microbiota. The polypeptide is Japanin-like-RS (Rhipicephalus sanguineus (Brown dog tick)).